The chain runs to 464 residues: D-inositol 3-phosphate glycosyltransferase (464 aa).

Basic and acidic residues predominate over residues 1–20; it reads MEGAPRRPDRHARSEEERHV. Positions 1–44 are disordered; the sequence is MEGAPRRPDRHARSEEERHVSQYASRLGRRSPAAPTRRRMLRKP. His53 contributes to the 1D-myo-inositol 3-phosphate binding site. UDP-N-acetyl-alpha-D-glucosamine is bound by residues 59-60 and Gly67; that span reads QP. Residues 64-69, Lys122, Tyr155, Thr179, and Arg199 contribute to the 1D-myo-inositol 3-phosphate site; that span reads DAGGMN. UDP-N-acetyl-alpha-D-glucosamine contacts are provided by Arg274, Lys279, and Val340. Positions 349, 350, and 352 each coordinate Mg(2+). Glu362 and Glu370 together coordinate UDP-N-acetyl-alpha-D-glucosamine. Position 376 (Thr376) interacts with Mg(2+).

Belongs to the glycosyltransferase group 1 family. MshA subfamily. In terms of assembly, homodimer.

It catalyses the reaction 1D-myo-inositol 3-phosphate + UDP-N-acetyl-alpha-D-glucosamine = 1D-myo-inositol 2-acetamido-2-deoxy-alpha-D-glucopyranoside 3-phosphate + UDP + H(+). Functionally, catalyzes the transfer of a N-acetyl-glucosamine moiety to 1D-myo-inositol 3-phosphate to produce 1D-myo-inositol 2-acetamido-2-deoxy-glucopyranoside 3-phosphate in the mycothiol biosynthesis pathway. This chain is D-inositol 3-phosphate glycosyltransferase, found in Streptomyces avermitilis (strain ATCC 31267 / DSM 46492 / JCM 5070 / NBRC 14893 / NCIMB 12804 / NRRL 8165 / MA-4680).